The chain runs to 293 residues: Glycine--tRNA ligase alpha subunit (293 aa).

It belongs to the class-II aminoacyl-tRNA synthetase family. Tetramer of two alpha and two beta subunits.

It is found in the cytoplasm. It carries out the reaction tRNA(Gly) + glycine + ATP = glycyl-tRNA(Gly) + AMP + diphosphate. This chain is Glycine--tRNA ligase alpha subunit, found in Sulfurimonas denitrificans (strain ATCC 33889 / DSM 1251) (Thiomicrospira denitrificans (strain ATCC 33889 / DSM 1251)).